Reading from the N-terminus, the 161-residue chain is MTMSRISHIELDDSNLPPPTPEIEQERKVAIYDLLEENSFALPARDDRAVPEGPYRVNLSIRDKRLVFDIQTEDEEKAAEFHLSLGPFRQVVKDYFQICESYFNAVKTLPPSQIETIDMARRGIHNEGSRVLQERLDGKAEIDTDTARRLFTLICVLHFGG.

The segment at Met-1–Pro-21 is disordered.

The protein belongs to the UPF0262 family.

This chain is UPF0262 protein SPOA0072, found in Ruegeria pomeroyi (strain ATCC 700808 / DSM 15171 / DSS-3) (Silicibacter pomeroyi).